A 661-amino-acid polypeptide reads, in one-letter code: Lateral signaling target protein 2 (661 aa).

The disordered stretch occupies residues 294–432 (VPEDTSSTLT…SDDEITDDVQ (139 aa)). Residues 297–310 (DTSSTLTMSDFRTN) show a composition bias toward polar residues. Composition is skewed to low complexity over residues 330 to 360 (SDST…SPHS) and 381 to 393 (TNSN…TESP). The span at 394-411 (ETIEEPDNVDMEESSESE) shows a compositional bias: acidic residues. Residues 412–422 (VDTHIDETRNE) show a composition bias toward basic and acidic residues. The segment at 566 to 626 (DEDCEQCTAC…VCNLCYVHRL (61 aa)) adopts an FYVE-type zinc-finger fold. Zn(2+) contacts are provided by C572, C575, C588, C591, C596, C599, C618, and C621. Over residues 641–650 (NGATVPSVTE) the composition is skewed to polar residues. Residues 641-661 (NGATVPSVTEQQSAQTASASS) form a disordered region. Positions 651–661 (QQSAQTASASS) are enriched in low complexity.

The protein belongs to the lst-2 family. As to expression, expressed in vulval precursor cells (VPCs).

In terms of biological role, negative regulator of epidermal growth factor receptor (EGFR) signaling. This chain is Lateral signaling target protein 2 (lst-2), found in Caenorhabditis elegans.